We begin with the raw amino-acid sequence, 1052 residues long: uncharacterized protein (1052 aa).

The protein belongs to the IIV-6 050L family.

This is an uncharacterized protein from Invertebrate iridescent virus 6 (IIV-6).